Here is a 182-residue protein sequence, read N- to C-terminus: tRNA-splicing endonuclease (182 aa).

Catalysis depends on residues Tyr-119, His-127, and Lys-158.

It belongs to the tRNA-intron endonuclease family. Archaeal short subfamily. Homotetramer; although the tetramer contains four active sites, only two participate in the cleavage. Therefore, it should be considered as a dimer of dimers.

The enzyme catalyses pretRNA = a 3'-half-tRNA molecule with a 5'-OH end + a 5'-half-tRNA molecule with a 2',3'-cyclic phosphate end + an intron with a 2',3'-cyclic phosphate and a 5'-hydroxyl terminus.. In terms of biological role, endonuclease that removes tRNA introns. Cleaves pre-tRNA at the 5'- and 3'-splice sites to release the intron. The products are an intron and two tRNA half-molecules bearing 2',3' cyclic phosphate and 5'-OH termini. Recognizes a pseudosymmetric substrate in which 2 bulged loops of 3 bases are separated by a stem of 4 bp. This Saccharolobus solfataricus (strain ATCC 35092 / DSM 1617 / JCM 11322 / P2) (Sulfolobus solfataricus) protein is tRNA-splicing endonuclease.